The chain runs to 325 residues: NADH-quinone oxidoreductase subunit H (325 aa).

The next 8 membrane-spanning stretches (helical) occupy residues 8-28, 81-101, 114-134, 159-179, 186-206, 237-257, 265-285, and 304-324; these read VIDILLTVVKAVVILLVVVTC, GIFTLAPVIAFTSLLITFAIV, IGVLFFLMMAGLAVYAVLFAG, FLGLSLMGVVAQAGSFNLGAI, LWNVVPQFFGFVTFALAGVAV, FFVGEYVGIVTISALMVTLFF, LPPFIWFSIKTAFFMMMFILI, and ICLPLTLLNLLATAAVILYNA.

Belongs to the complex I subunit 1 family. As to quaternary structure, NDH-1 is composed of 13 different subunits. Subunits NuoA, H, J, K, L, M, N constitute the membrane sector of the complex.

It localises to the cell inner membrane. The catalysed reaction is a quinone + NADH + 5 H(+)(in) = a quinol + NAD(+) + 4 H(+)(out). Its function is as follows. NDH-1 shuttles electrons from NADH, via FMN and iron-sulfur (Fe-S) centers, to quinones in the respiratory chain. The immediate electron acceptor for the enzyme in this species is believed to be ubiquinone. Couples the redox reaction to proton translocation (for every two electrons transferred, four hydrogen ions are translocated across the cytoplasmic membrane), and thus conserves the redox energy in a proton gradient. This subunit may bind ubiquinone. The protein is NADH-quinone oxidoreductase subunit H of Sodalis glossinidius (strain morsitans).